Consider the following 531-residue polypeptide: Calcium-dependent protein kinase 21 (531 aa).

The segment covering Met-1 to Lys-10 has biased composition (basic residues). The interval Met-1–Val-62 is disordered. Gly-2 carries N-myristoyl glycine lipidation. Polar residues predominate over residues Ile-48–Val-60. Residues Tyr-80–Ile-338 form the Protein kinase domain. ATP contacts are provided by residues Leu-86 to Thr-94 and Lys-109. Catalysis depends on Asp-204, which acts as the Proton acceptor. Ser-244 carries the post-translational modification Phosphoserine. Positions Ala-343–Ile-373 are autoinhibitory domain. EF-hand domains follow at residues Glu-380–Arg-415, Leu-416–Leu-451, Asp-452–Gly-487, and Asp-488–Gln-522. Ca(2+)-binding residues include Asp-393, Asp-395, Ser-397, Thr-399, Glu-404, Asp-429, Asp-431, Asn-433, Thr-435, Glu-440, Asp-465, Asp-467, Ser-469, His-471, Glu-476, Asp-500, Asp-502, Asp-504, Arg-506, and Glu-511.

It belongs to the protein kinase superfamily. Ser/Thr protein kinase family. CDPK subfamily. Interacts with SLAC1 and ABI1.

Its subcellular location is the cell membrane. The enzyme catalyses L-seryl-[protein] + ATP = O-phospho-L-seryl-[protein] + ADP + H(+). It catalyses the reaction L-threonyl-[protein] + ATP = O-phospho-L-threonyl-[protein] + ADP + H(+). With respect to regulation, activated by calcium. Autophosphorylation may play an important role in the regulation of the kinase activity. Functionally, may play a role in signal transduction pathways that involve calcium as a second messenger. Mediates the phosphorylation and activation of the S-type anion efflux channel SLAC1. This is Calcium-dependent protein kinase 21 (CPK21) from Arabidopsis thaliana (Mouse-ear cress).